The following is a 330-amino-acid chain: Ketol-acid reductoisomerase (NADP(+)) (330 aa).

The region spanning 1-181 (MNAYYEQDAD…GGTKAGVIET (181 aa)) is the KARI N-terminal Rossmann domain. Residues 24–27 (YGSQ), arginine 47, serine 50, serine 52, and 82–85 (DQYQ) each bind NADP(+). Histidine 107 is an active-site residue. Glycine 133 provides a ligand contact to NADP(+). The KARI C-terminal knotted domain occupies 182–327 (TFKNETETDL…SKLRDMMSWL (146 aa)). Mg(2+)-binding residues include aspartate 190, glutamate 194, glutamate 226, and glutamate 230. Position 251 (serine 251) interacts with substrate.

It belongs to the ketol-acid reductoisomerase family. Mg(2+) is required as a cofactor.

The catalysed reaction is (2R)-2,3-dihydroxy-3-methylbutanoate + NADP(+) = (2S)-2-acetolactate + NADPH + H(+). The enzyme catalyses (2R,3R)-2,3-dihydroxy-3-methylpentanoate + NADP(+) = (S)-2-ethyl-2-hydroxy-3-oxobutanoate + NADPH + H(+). The protein operates within amino-acid biosynthesis; L-isoleucine biosynthesis; L-isoleucine from 2-oxobutanoate: step 2/4. It functions in the pathway amino-acid biosynthesis; L-valine biosynthesis; L-valine from pyruvate: step 2/4. In terms of biological role, involved in the biosynthesis of branched-chain amino acids (BCAA). Catalyzes an alkyl-migration followed by a ketol-acid reduction of (S)-2-acetolactate (S2AL) to yield (R)-2,3-dihydroxy-isovalerate. In the isomerase reaction, S2AL is rearranged via a Mg-dependent methyl migration to produce 3-hydroxy-3-methyl-2-ketobutyrate (HMKB). In the reductase reaction, this 2-ketoacid undergoes a metal-dependent reduction by NADPH to yield (R)-2,3-dihydroxy-isovalerate. The sequence is that of Ketol-acid reductoisomerase (NADP(+)) from Chlorobium limicola (strain DSM 245 / NBRC 103803 / 6330).